Here is a 188-residue protein sequence, read N- to C-terminus: Nicotinamide-nucleotide adenylyltransferase (188 aa).

This sequence belongs to the archaeal NMN adenylyltransferase family.

The protein localises to the cytoplasm. The enzyme catalyses beta-nicotinamide D-ribonucleotide + ATP + H(+) = diphosphate + NAD(+). The protein operates within cofactor biosynthesis; NAD(+) biosynthesis; NAD(+) from nicotinamide D-ribonucleotide: step 1/1. The polypeptide is Nicotinamide-nucleotide adenylyltransferase (Pyrococcus furiosus (strain ATCC 43587 / DSM 3638 / JCM 8422 / Vc1)).